A 391-amino-acid chain; its full sequence is Probable sugar efflux transporter (391 aa).

The next 12 membrane-spanning stretches (helical) occupy residues 16-36 (VFVFSLSAFIFNTTEFVPVAL), 51-71 (VGLMITAYAWVVSLGSLPLML), 82-102 (LLFLFALFIFSHILSALAWNF), 110-130 (MGIAFAHSIFWSITASLVIRV), 138-158 (QALGLLALGSSLAMILGLPLG), 170-190 (TFGVIGGVATLIMLLMWKLLP), 210-230 (PLLVGIYLLVIMVISGHFTTY), 247-267 (ITTLMLFVFGLAGVVGSFLFG), 277-297 (FIAFAMVLVICPQLLLFVFKN), 300-320 (WVIFLQIFLWGIGITSLTIAL), 338-358 (IFSGSYNVGIGSGALFGSIVI), and 361-381 (LGLEYIGFVGGALGLLALFWL).

Belongs to the major facilitator superfamily. SotB (TC 2.A.1.2) family.

The protein resides in the cell inner membrane. Involved in the efflux of sugars. The physiological role may be the reduction of the intracellular concentration of toxic sugars or sugar metabolites. This Helicobacter pylori (strain J99 / ATCC 700824) (Campylobacter pylori J99) protein is Probable sugar efflux transporter.